The sequence spans 136 residues: Small ribosomal subunit protein uS8c (136 aa).

Belongs to the universal ribosomal protein uS8 family. Part of the 30S ribosomal subunit.

The protein localises to the plastid. It localises to the chloroplast. One of the primary rRNA binding proteins, it binds directly to 16S rRNA central domain where it helps coordinate assembly of the platform of the 30S subunit. The sequence is that of Small ribosomal subunit protein uS8c (rps8) from Hordeum vulgare (Barley).